The sequence spans 1976 residues: Myosin-10 (1976 aa).

At arginine 18 the chain carries Omega-N-methylarginine. Positions 31-81 (TAKKLVWIPSERHGFEAASIKEERGDEVMVELAENGKKAMVNKDDIQKMNP) constitute a Myosin N-terminal SH3-like domain. In terms of domain architecture, Myosin motor spans 85–783 (SKVEDMAELT…VLAHLEEERD (699 aa)). An ATP-binding site is contributed by 178–185 (GESGAGKT). The residue at position 442 (lysine 442) is an N6-acetyllysine. The actin-binding stretch occupies residues 661-683 (LTKLMATLRNTNPNFVRCIIPNH). In terms of domain architecture, IQ spans 786–815 (ITDIIIFFQAVCRGYLARKAFAKKQQQLSA). Residues 845 to 1976 (LQVTRQEEEL…VNDTQPPQSE (1132 aa)) are a coiled coil. A disordered region spans residues 1125 to 1175 (EDFESEKASRNKAEKQKRDLSEELEALKTELEDTLDTTAAQQELRTKREQE). Positions 1129 to 1155 (SEKASRNKAEKQKRDLSEELEALKTEL) are enriched in basic and acidic residues. Serine 1145 is subject to Phosphoserine. An N6-acetyllysine mark is found at lysine 1241, lysine 1301, and lysine 1645. Disordered regions lie at residues 1697 to 1718 (ASSE…DEIA) and 1874 to 1976 (KANA…PQSE). The span at 1698–1708 (SSERARRHAEQ) shows a compositional bias: basic and acidic residues. Arginine 1930 carries the omega-N-methylarginine modification. Residues serine 1935, serine 1937, serine 1938, and serine 1939 each carry the phosphoserine modification. At arginine 1940 the chain carries Omega-N-methylarginine. Serine 1952 and serine 1956 each carry phosphoserine. The residue at position 1960 (threonine 1960) is a Phosphothreonine. A compositionally biased stretch (polar residues) spans 1967–1976 (VNDTQPPQSE). The residue at position 1975 (serine 1975) is a Phosphoserine.

It belongs to the TRAFAC class myosin-kinesin ATPase superfamily. Myosin family. Myosin is a hexameric protein that consists of 2 heavy chain subunits (MHC), 2 alkali light chain subunits (MLC) and 2 regulatory light chain subunits (MLC-2). Interacts with PLEKHG6. Interacts with ECPAS. Interacts with LARP6. Interacts with MCC. Interacts with KIF26B. Interacts with CFAP95. Post-translationally, phosphorylated by ABL2. In newborn kidney, expressed in the mesenchyme and ureteric buds.

Its subcellular location is the cell projection. It localises to the lamellipodium. Functionally, involved with LARP6 in the stabilization of type I collagen mRNAs for CO1A1 and CO1A2. During cell spreading, plays an important role in cytoskeleton reorganization, focal contacts formation (in the central part but not the margins of spreading cells), and lamellipodial extension; this function is mechanically antagonized by MYH9. Cellular myosin that appears to play a role in cytokinesis, cell shape, and specialized functions such as secretion and capping. This is Myosin-10 (Myh10) from Mus musculus (Mouse).